Reading from the N-terminus, the 294-residue chain is Protein RarD (294 aa).

Over 1–11 the chain is Cytoplasmic; sequence MDAKQTRQGVL. A helical transmembrane segment spans residues 12–34; the sequence is LALAAYFIWGIAPAYFKLIYYVP. The EamA domain maps to 18-145; that stretch reads FIWGIAPAYF…AVCGVLVQLW (128 aa). At 35–37 the chain is on the periplasmic side; the sequence is ADE. Residues 38 to 60 form a helical membrane-spanning segment; sequence ILTHRVIWSFFFMVALLSVSRQW. The Cytoplasmic segment spans residues 61 to 72; sequence RQVKRLLKTPKK. A helical membrane pass occupies residues 73–95; it reads IFLLALSAVLVGGNWLLFIWAVN. Over 96–99 the chain is Periplasmic; it reads NHHM. A helical membrane pass occupies residues 100 to 122; sequence LEASLGYFINPLVNILLGMIFLG. Residues 123–128 lie on the Cytoplasmic side of the membrane; the sequence is ERFRRM. The chain crosses the membrane as a helical span at residues 129-146; the sequence is QWLAVILAVCGVLVQLWT. Over 147 to 149 the chain is Periplasmic; sequence FGS. The helical transmembrane segment at 150 to 167 threads the bilayer; the sequence is LPIIALGLAFSFAFYGLV. The Cytoplasmic segment spans residues 168 to 179; sequence RKKIAVEAQTGM. The helical transmembrane segment at 180-197 threads the bilayer; that stretch reads LVETLWLLPVAAIYLFGI. The Periplasmic portion of the chain corresponds to 198 to 211; it reads ADSPTSHMGQNALS. Residues 212–234 traverse the membrane as a helical segment; that stretch reads LNLLLMAAGVVTTIPLLCFTGAA. Over 235–238 the chain is Cytoplasmic; sequence TRLR. The helical transmembrane segment at 239 to 261 threads the bilayer; sequence LSTLGFFQYIGPTLMFLLAVTFY. The Periplasmic portion of the chain corresponds to 262 to 270; the sequence is GEVPGADKM. A helical membrane pass occupies residues 271–290; the sequence is VTFAFIWVALAIFVMDAIYT. Over 291 to 294 the chain is Cytoplasmic; that stretch reads QRKK.

Belongs to the EamA transporter family.

The protein resides in the cell inner membrane. In Salmonella typhimurium (strain LT2 / SGSC1412 / ATCC 700720), this protein is Protein RarD (rarD).